Reading from the N-terminus, the 283-residue chain is MATLRAMLKNAFILFLFTLTIMAKTVFSQQCGTTGCAANLCCSRYGYCGTTDAYCGTGCRSGPCSSSTTPIPPTPSGGAGGLNADPRDTIENVVTPAFFDGIMSKVGNGCPAKGFYTRQAFIAAAQSFDAYKGTVAKREIAAMLAQFSHESGSFCYKEEIARGKYCSPSTAYPCTPGKDYYGRGPIQITWNYNYGAAGKFLGLPLLTDPDMVARSPQVAFQCAMWFWNLNVRPVLDQGFGATTRKINGGECNGRRPAAVQSRVNYYLEFCRTLGITPGANLSC.

The N-terminal stretch at 1-28 (MATLRAMLKNAFILFLFTLTIMAKTVFS) is a signal peptide. A Chitin-binding type-1 domain is found at 29–66 (QQCGTTGCAANLCCSRYGYCGTTDAYCGTGCRSGPCSS). 4 disulfides stabilise this stretch: cysteine 31/cysteine 42, cysteine 36/cysteine 48, cysteine 41/cysteine 55, and cysteine 59/cysteine 64. The interval 88–283 (DTIENVVTPA…GITPGANLSC (196 aa)) is catalytic. The active-site Proton donor is the glutamate 150. A glycan (N-linked (GlcNAc...) asparagine) is linked at asparagine 280.

The protein belongs to the glycosyl hydrolase 19 family. Chitinase class I subfamily.

The enzyme catalyses Random endo-hydrolysis of N-acetyl-beta-D-glucosaminide (1-&gt;4)-beta-linkages in chitin and chitodextrins.. This Arabidopsis thaliana (Mouse-ear cress) protein is Endochitinase At2g43620.